We begin with the raw amino-acid sequence, 141 residues long: Hemoglobin subunit alpha-A (141 aa).

A Globin domain is found at 1-141; sequence VLSAADKTNV…VGAVLTAKYR (141 aa). H58 provides a ligand contact to O2. H87 contributes to the heme b binding site.

It belongs to the globin family. As to quaternary structure, heterotetramer of two alpha chains and two beta chains. As to expression, red blood cells.

Its function is as follows. Involved in oxygen transport from the lung to the various peripheral tissues. This Cygnus olor (Mute swan) protein is Hemoglobin subunit alpha-A (HBAA).